Consider the following 638-residue polypeptide: ATP-dependent zinc metalloprotease FtsH (638 aa).

Residues M1–R11 lie on the Cytoplasmic side of the membrane. The chain crosses the membrane as a helical span at residues S12 to G32. Residues N33–G114 are Lumenal-facing. Residues L115 to F135 traverse the membrane as a helical segment. The Cytoplasmic portion of the chain corresponds to L136–A638. G209–T216 provides a ligand contact to ATP. A Zn(2+)-binding site is contributed by H431. Residue E432 is part of the active site. Zn(2+) is bound by residues H435 and D510.

The protein in the central section; belongs to the AAA ATPase family. This sequence in the C-terminal section; belongs to the peptidase M41 family. In terms of assembly, homohexamer. Requires Zn(2+) as cofactor.

The protein resides in the cellular thylakoid membrane. Acts as a processive, ATP-dependent zinc metallopeptidase for both cytoplasmic and membrane proteins. Plays a role in the quality control of integral membrane proteins. The polypeptide is ATP-dependent zinc metalloprotease FtsH (Synechococcus sp. (strain JA-2-3B'a(2-13)) (Cyanobacteria bacterium Yellowstone B-Prime)).